A 177-amino-acid polypeptide reads, in one-letter code: Peptide methionine sulfoxide reductase MsrA (177 aa).

The active site involves Cys12.

Belongs to the MsrA Met sulfoxide reductase family.

The enzyme catalyses L-methionyl-[protein] + [thioredoxin]-disulfide + H2O = L-methionyl-(S)-S-oxide-[protein] + [thioredoxin]-dithiol. The catalysed reaction is [thioredoxin]-disulfide + L-methionine + H2O = L-methionine (S)-S-oxide + [thioredoxin]-dithiol. Its function is as follows. Has an important function as a repair enzyme for proteins that have been inactivated by oxidation. Catalyzes the reversible oxidation-reduction of methionine sulfoxide in proteins to methionine. The chain is Peptide methionine sulfoxide reductase MsrA from Halobacterium salinarum (strain ATCC 29341 / DSM 671 / R1).